Here is a 364-residue protein sequence, read N- to C-terminus: Thymidine kinase (364 aa).

Position 36-43 (36-43 (GPFGVGKT)) interacts with ATP. Glu-64 acts as the Proton acceptor in catalysis. Position 108 (Gln-108) interacts with substrate. Arg-201 contacts ATP. Arg-207 is a substrate binding site.

Belongs to the herpesviridae thymidine kinase family. In terms of assembly, homodimer.

It carries out the reaction thymidine + ATP = dTMP + ADP + H(+). Functionally, catalyzes the transfer of the gamma-phospho group of ATP to thymidine to generate dTMP in the salvage pathway of pyrimidine synthesis. The dTMP serves as a substrate for DNA polymerase during viral DNA replication. Allows the virus to be reactivated and to grow in non-proliferative cells lacking a high concentration of phosphorylated nucleic acid precursors. This Infectious laryngotracheitis virus (strain Thorne V882) (ILTV) protein is Thymidine kinase.